The primary structure comprises 51 residues: Insulin (51 aa).

3 disulfide bridges follow: C7–C37, C19–C50, and C36–C41.

The protein belongs to the insulin family. As to quaternary structure, heterodimer of a B chain and an A chain linked by two disulfide bonds.

It is found in the secreted. Functionally, insulin decreases blood glucose concentration. It increases cell permeability to monosaccharides, amino acids and fatty acids. It accelerates glycolysis, the pentose phosphate cycle, and glycogen synthesis in liver. This chain is Insulin (ins), found in Anguilla rostrata (American eel).